The sequence spans 455 residues: 2-succinylbenzoate--CoA ligase (455 aa).

The protein belongs to the ATP-dependent AMP-binding enzyme family. MenE subfamily.

The catalysed reaction is 2-succinylbenzoate + ATP + CoA = 2-succinylbenzoyl-CoA + AMP + diphosphate. It functions in the pathway quinol/quinone metabolism; 1,4-dihydroxy-2-naphthoate biosynthesis; 1,4-dihydroxy-2-naphthoate from chorismate: step 5/7. It participates in quinol/quinone metabolism; menaquinone biosynthesis. Converts 2-succinylbenzoate (OSB) to 2-succinylbenzoyl-CoA (OSB-CoA). The protein is 2-succinylbenzoate--CoA ligase of Salmonella typhimurium (strain LT2 / SGSC1412 / ATCC 700720).